The chain runs to 209 residues: Large ribosomal subunit protein uL3 (209 aa).

Gln-150 carries the N5-methylglutamine modification.

The protein belongs to the universal ribosomal protein uL3 family. In terms of assembly, part of the 50S ribosomal subunit. Forms a cluster with proteins L14 and L19. Post-translationally, methylated by PrmB.

Its function is as follows. One of the primary rRNA binding proteins, it binds directly near the 3'-end of the 23S rRNA, where it nucleates assembly of the 50S subunit. The polypeptide is Large ribosomal subunit protein uL3 (Ectopseudomonas mendocina (strain ymp) (Pseudomonas mendocina)).